A 491-amino-acid chain; its full sequence is Sodium-dependent glucose transporter 1 (491 aa).

11 consecutive transmembrane segments (helical) span residues 26–46 (FIFV…GILF), 52–72 (HLLL…VPWC), 81–101 (VMSV…IIIL), 119–139 (FALG…FLPL), 165–185 (LSYI…FILF), 210–230 (AVIF…VAYG), 255–275 (LFWG…TCLY), 277–297 (GTML…LVLF), 303–323 (LLWV…PSGF), 338–358 (SLFV…VGYL), and 365–385 (FPVL…LFPV). 2 disordered regions span residues 397–425 (AQYN…DEAQ) and 438–491 (NDQM…EKND). Acidic residues predominate over residues 416–425 (MEEEDEDEAQ). The segment covering 440 to 458 (QMKNSVTVISEDTPGNSAP) has biased composition (polar residues).

The protein belongs to the major facilitator superfamily.

It localises to the apical cell membrane. In terms of biological role, may function as a sodium-dependent glucose transporter. Potential channels for urea in the inner medulla of kidney. This Xenopus laevis (African clawed frog) protein is Sodium-dependent glucose transporter 1 (mfsd4b).